The sequence spans 109 residues: Aquaporin-2 (109 aa).

The Cytoplasmic segment spans residues 1–6; sequence SIAFSR. Residues 7-27 form a helical membrane-spanning segment; sequence AVFSEFLATLLFVFFGLGSAL. Topologically, residues 28–35 are extracellular; sequence NWPQALPS. The helical transmembrane segment at 36–54 threads the bilayer; sequence VLQIAMAFGLAIGTLVQTL. Residues 55–59 are Cytoplasmic-facing; it reads GHISG. Positions 60–69 form an intramembrane region, discontinuously helical; the sequence is AHINPAVTVA. An NPA 1 motif is present at residues 63–65; it reads NPA. The Cytoplasmic segment spans residues 70–80; the sequence is CLVGCHVSFLR. Residues 81-102 form a helical membrane-spanning segment; that stretch reads ATFYLAAQLLGAVAGAALLHEL. At 103-109 the chain is on the extracellular side; that stretch reads TPPDIRG.

The protein belongs to the MIP/aquaporin (TC 1.A.8) family. Homotetramer. In terms of processing, serine phosphorylation is necessary and sufficient for expression at the apical membrane. Endocytosis is not phosphorylation-dependent. N-glycosylated.

The protein localises to the apical cell membrane. It is found in the basolateral cell membrane. The protein resides in the cell membrane. Its subcellular location is the cytoplasmic vesicle membrane. It localises to the golgi apparatus. The protein localises to the trans-Golgi network membrane. It catalyses the reaction H2O(in) = H2O(out). The catalysed reaction is glycerol(in) = glycerol(out). Its function is as follows. Forms a water-specific channel that provides the plasma membranes of renal collecting duct with high permeability to water, thereby permitting water to move in the direction of an osmotic gradient. Plays an essential role in renal water homeostasis. Could also be permeable to glycerol. The polypeptide is Aquaporin-2 (Elephas maximus (Indian elephant)).